We begin with the raw amino-acid sequence, 377 residues long: Prolargin (377 aa).

Positions M1–G21 are cleaved as a signal peptide. The disordered stretch occupies residues Q22–P61. 2 stretches are compositionally biased toward pro residues: residues R36 to H45 and D52 to P61. 12 LRR repeats span residues R90–I109, T110–I133, R134–L157, E158–I178, S179–L202, S203–L228, R229–I249, E250–L273, S274–I298, S299–I318, E319–L357, and K358–I377. An N-linked (GlcNAc...) asparagine glycan is attached at N119. N-linked (GlcNAc...) asparagine glycans are attached at residues N284, N315, and N322. A disulfide bridge connects residues C327 and C368.

The protein belongs to the small leucine-rich proteoglycan (SLRP) family. SLRP class II subfamily. As to quaternary structure, binds the basement membrane heparan sulfate proteoglycan perlecan and triple helical collagens type I and type II. In terms of processing, glycosylated; contains heparan sulfate.

The protein resides in the secreted. The protein localises to the extracellular space. Its subcellular location is the extracellular matrix. Its function is as follows. May anchor basement membranes to the underlying connective tissue. This chain is Prolargin (Prelp), found in Rattus norvegicus (Rat).